The following is a 364-amino-acid chain: tRNA 2-selenouridine synthase (364 aa).

The region spanning 14-137 is the Rhodanese domain; it reads LIADTPIIDV…LRQTAIQATI (124 aa). The active-site S-selanylcysteine intermediate is C97.

It belongs to the SelU family. In terms of assembly, monomer.

The catalysed reaction is 5-methylaminomethyl-2-thiouridine(34) in tRNA + selenophosphate + (2E)-geranyl diphosphate + H2O + H(+) = 5-methylaminomethyl-2-selenouridine(34) in tRNA + (2E)-thiogeraniol + phosphate + diphosphate. The enzyme catalyses 5-methylaminomethyl-2-thiouridine(34) in tRNA + (2E)-geranyl diphosphate = 5-methylaminomethyl-S-(2E)-geranyl-thiouridine(34) in tRNA + diphosphate. It carries out the reaction 5-methylaminomethyl-S-(2E)-geranyl-thiouridine(34) in tRNA + selenophosphate + H(+) = 5-methylaminomethyl-2-(Se-phospho)selenouridine(34) in tRNA + (2E)-thiogeraniol. It catalyses the reaction 5-methylaminomethyl-2-(Se-phospho)selenouridine(34) in tRNA + H2O = 5-methylaminomethyl-2-selenouridine(34) in tRNA + phosphate. In terms of biological role, involved in the post-transcriptional modification of the uridine at the wobble position (U34) of tRNA(Lys), tRNA(Glu) and tRNA(Gln). Catalyzes the conversion of 2-thiouridine (S2U-RNA) to 2-selenouridine (Se2U-RNA). Acts in a two-step process involving geranylation of 2-thiouridine (S2U) to S-geranyl-2-thiouridine (geS2U) and subsequent selenation of the latter derivative to 2-selenouridine (Se2U) in the tRNA chain. This chain is tRNA 2-selenouridine synthase, found in Escherichia coli (strain K12 / MC4100 / BW2952).